Consider the following 133-residue polypeptide: Small ribosomal subunit protein uS8 (133 aa).

Belongs to the universal ribosomal protein uS8 family. As to quaternary structure, part of the 30S ribosomal subunit. Contacts proteins S5 and S12.

In terms of biological role, one of the primary rRNA binding proteins, it binds directly to 16S rRNA central domain where it helps coordinate assembly of the platform of the 30S subunit. The polypeptide is Small ribosomal subunit protein uS8 (Synechococcus elongatus (strain ATCC 33912 / PCC 7942 / FACHB-805) (Anacystis nidulans R2)).